We begin with the raw amino-acid sequence, 292 residues long: MAGYPPNPGSGYPYGGAGGYGAPPPPYGSSPAPSAPPYGAKPPKEGKTSSSSAPYYGGGGGYGAPPSTQPYGSGGGYGAPPSSQPYGAPYGAPPPSSAPYGAPGGYGSPFASLVPSAFPPGTDPNVVACFQAADRDGSGMIDDKELQSALSGYSQSFSLRTVHLLMYLFTNTNVRKIGPKEFTSVFYSLQNWRSIFERFDRDRSGKIDATELRDALLSLGYSVSPTVLDLLVSKFDKTGGKNKAIEYDNFIECCLTVKGLTEKFKEKDTAFSGSATFTYEAFMLTVLPFLIA.

The disordered stretch occupies residues 1 to 80; that stretch reads MAGYPPNPGS…YGSGGGYGAP (80 aa). Positions 12 to 21 are enriched in gly residues; that stretch reads YPYGGAGGYG. A compositionally biased stretch (pro residues) spans 22–40; sequence APPPPYGSSPAPSAPPYGA. 2 consecutive EF-hand domains span residues 121 to 156 and 187 to 222; these read GTDP…YSQS and YSLQ…LGYS. Ca(2+) contacts are provided by Asp134, Asp136, Ser138, Met140, Glu145, Asp200, Asp202, Ser204, Lys206, and Glu211.

Potential calcium sensor. This chain is Calcium-binding protein CBP, found in Oryza sativa subsp. japonica (Rice).